Consider the following 203-residue polypeptide: MSAPRIGVLALQGDVREHVRALREAGADAGEVRRAGELAELDGLVLPGGESTTIGRLLRVFDLLEPLRAAVAGGLPVFGSCAGMILLAQDVIDGRPGQPLIGGLDVVVRRNAFGRQVESFETDLVVDGVDGPAVHAVFIRAPWVEKAGDGVEVLARVADRPVAVRQGPLLATSFHPELTGDIRVHRLFVEIVRSELGLKRGRS.

Glycine 49–serine 51 provides a ligand contact to L-glutamine. Cysteine 81 serves as the catalytic Nucleophile. L-glutamine is bound by residues arginine 110 and isoleucine 139 to arginine 140. Catalysis depends on charge relay system residues histidine 175 and glutamate 177.

This sequence belongs to the glutaminase PdxT/SNO family. In terms of assembly, in the presence of PdxS, forms a dodecamer of heterodimers. Only shows activity in the heterodimer.

The enzyme catalyses aldehydo-D-ribose 5-phosphate + D-glyceraldehyde 3-phosphate + L-glutamine = pyridoxal 5'-phosphate + L-glutamate + phosphate + 3 H2O + H(+). It carries out the reaction L-glutamine + H2O = L-glutamate + NH4(+). It participates in cofactor biosynthesis; pyridoxal 5'-phosphate biosynthesis. Functionally, catalyzes the hydrolysis of glutamine to glutamate and ammonia as part of the biosynthesis of pyridoxal 5'-phosphate. The resulting ammonia molecule is channeled to the active site of PdxS. In Parafrankia sp. (strain EAN1pec), this protein is Pyridoxal 5'-phosphate synthase subunit PdxT.